Reading from the N-terminus, the 73-residue chain is Large ribosomal subunit protein bL31 (73 aa).

It belongs to the bacterial ribosomal protein bL31 family. Type A subfamily. Part of the 50S ribosomal subunit.

In terms of biological role, binds the 23S rRNA. This Agrobacterium fabrum (strain C58 / ATCC 33970) (Agrobacterium tumefaciens (strain C58)) protein is Large ribosomal subunit protein bL31.